Reading from the N-terminus, the 245-residue chain is MSQVNMRDMLKAGVHFGHQTRYWNPKMGKYIFGARNKIHIINLEKTLPMFNDALAFVERLAQGKNKIMFVGTKRSAGKIVAEQAARCGSPYVDHRWLGGMLTNYKTIRASIKRLRDLETQAEDGTFAKLTKKEALMRSRDLEKLDRSLGGIKDMGGLPDALFVIDVDHERIAITEANKLGIPVIGVVDTNSSPEGVDFVIPGNDDAIRAIELYMTSMADAVIRGRNNVAGGTEVYAEEAAAPAAE.

It belongs to the universal ribosomal protein uS2 family.

This chain is Small ribosomal subunit protein uS2, found in Pseudomonas entomophila (strain L48).